Here is a 512-residue protein sequence, read N- to C-terminus: Bifunctional pantoate ligase/cytidylate kinase (512 aa).

The segment at 1–276 (MKLQTSADLQ…CGEARLIDHR (276 aa)) is pantoate--beta-alanine ligase. Residue 27–34 (MGALHQGH) coordinates ATP. His34 acts as the Proton donor in catalysis. Gln58 serves as a coordination point for (R)-pantoate. Gln58 contributes to the beta-alanine binding site. Residue 147–150 (GEKD) participates in ATP binding. Residue Gln153 participates in (R)-pantoate binding. ATP is bound by residues Leu176 and 184–187 (LSSR). Positions 277 to 512 (VLMSRLPILA…VPVEALNADA (236 aa)) are cytidylate kinase.

This sequence in the N-terminal section; belongs to the pantothenate synthetase family. In the C-terminal section; belongs to the cytidylate kinase family. Type 1 subfamily.

It localises to the cytoplasm. The enzyme catalyses (R)-pantoate + beta-alanine + ATP = (R)-pantothenate + AMP + diphosphate + H(+). It catalyses the reaction CMP + ATP = CDP + ADP. The catalysed reaction is dCMP + ATP = dCDP + ADP. Its pathway is cofactor biosynthesis; (R)-pantothenate biosynthesis; (R)-pantothenate from (R)-pantoate and beta-alanine: step 1/1. In terms of biological role, catalyzes the condensation of pantoate with beta-alanine in an ATP-dependent reaction via a pantoyl-adenylate intermediate. Functionally, catalyzes the transfer of a phosphate group from ATP to either CMP or dCMP to form CDP or dCDP and ADP, respectively. This Synechococcus sp. (strain RCC307) protein is Bifunctional pantoate ligase/cytidylate kinase.